Here is a 385-residue protein sequence, read N- to C-terminus: Aryl-alcohol dehydrogenase [NADP(+)] (385 aa).

The active-site Proton donor is the Tyr76. 238–248 provides a ligand contact to NADP(+); the sequence is NVLCAGKIRTD.

It belongs to the aldo/keto reductase family. Aldo/keto reductase 2 subfamily. The N-terminus is blocked.

It catalyses the reaction an aromatic primary alcohol + NADP(+) = an aromatic aldehyde + NADPH + H(+). In Phanerodontia chrysosporium (White-rot fungus), this protein is Aryl-alcohol dehydrogenase [NADP(+)].